Consider the following 195-residue polypeptide: MKSKGVESRKRLLKAAANEFSVRGFHDAKVSEIVKKAGFTQPSFYLYFQSKEAIFAELITDFHSRVRKLTESLLLENGLNTEDVSKRVLLAVETVFQFLDEDKDLTKIGFFLNPEAKQMKKDLAMVLKENLEAEQRLGYFHSELDMETVAECLVGMIEHLTESFLLTGIKDPASLAAEVVNLLIYGMLPKGNDVR.

The region spanning 6 to 66 (VESRKRLLKA…ELITDFHSRV (61 aa)) is the HTH tetR-type domain. A DNA-binding region (H-T-H motif) is located at residues 29–48 (KVSEIVKKAGFTQPSFYLYF).

This is an uncharacterized protein from Bacillus subtilis (strain 168).